The following is a 494-amino-acid chain: MSTEQLPPDLRRVHMVGIGGAGMSGIARILLDRGGLVSGSDAKESRGVHALRARGALIRIGHDASSLDLLPGGATAVVTTHAAIPKTNPELVEARRRGIPVVLRPAVLAKLMAGRTTLMVTGTHGKTTTTSMLIVALQHCGLDPSFAVGGELGEAGTNAHHGSGDCFVAEADESDGSLLQYTPHVAVITNIESDHLDFYGSVEAYVAVFDSFVERIVPGGALVVCTDDPGGAALAQRATELGIRVLRYGSVPGETMAATLVSWQQQGVGAVAHIRLASELATAQGPRVMRLSVPGRHMALNALGALLAAVQIGAPADEVLDGLAGFEGVRRRFELVGTCGVGKASVRVFDDYAHHPTEISATLAAARMVLEQGDGGRCMVVFQPHLYSRTKAFAAEFGRALNAADEVFVLDVYGAREQPLAGVSGASVAEHVTVPMRYVPDFSAVAQQVAAAASPGDVIVTMGAGDVTLLGPEILTALRVRANRSAPGRPGVLG.

122–128 serves as a coordination point for ATP; the sequence is GTHGKTT.

This sequence belongs to the MurCDEF family.

The protein resides in the cytoplasm. The catalysed reaction is UDP-N-acetyl-alpha-D-muramate + L-alanine + ATP = UDP-N-acetyl-alpha-D-muramoyl-L-alanine + ADP + phosphate + H(+). Its pathway is cell wall biogenesis; peptidoglycan biosynthesis. Cell wall formation. The polypeptide is UDP-N-acetylmuramate--L-alanine ligase (Mycobacterium bovis (strain ATCC BAA-935 / AF2122/97)).